A 295-amino-acid polypeptide reads, in one-letter code: Zinc finger C2H2 protein ECU08_0560 (295 aa).

2 consecutive C2H2-type zinc fingers follow at residues 219–243 (FVCT…NLMH) and 249–273 (HKCR…YKVH).

The protein is Zinc finger C2H2 protein ECU08_0560 of Encephalitozoon cuniculi (strain GB-M1) (Microsporidian parasite).